Consider the following 1099-residue polypeptide: ATP-dependent helicase/deoxyribonuclease subunit B (1099 aa).

4 residues coordinate [4Fe-4S] cluster: Cys766, Cys1056, Cys1059, and Cys1065.

The protein belongs to the helicase family. AddB/RexB type 2 subfamily. As to quaternary structure, heterodimer of AddA and RexB. Requires Mg(2+) as cofactor. [4Fe-4S] cluster is required as a cofactor.

Functionally, the heterodimer acts as both an ATP-dependent DNA helicase and an ATP-dependent, dual-direction single-stranded exonuclease. Recognizes the chi site generating a DNA molecule suitable for the initiation of homologous recombination. This subunit has 5' -&gt; 3' nuclease activity but not helicase activity. The polypeptide is ATP-dependent helicase/deoxyribonuclease subunit B (Lactococcus lactis subsp. lactis (strain IL1403) (Streptococcus lactis)).